The primary structure comprises 310 residues: Protease HtpX homolog (310 aa).

A run of 2 helical transmembrane segments spans residues 16–36 (NAVL…VDVI) and 55–75 (IFPT…VVCI). His166 contacts Zn(2+). Residue Glu167 is part of the active site. His170 contacts Zn(2+). 2 helical membrane-spanning segments follow: residues 182 to 202 (VGIL…FFMG) and 214 to 234 (MILL…QMYL). Glu239 contributes to the Zn(2+) binding site.

It belongs to the peptidase M48B family. The cofactor is Zn(2+).

The protein resides in the cell inner membrane. The protein is Protease HtpX homolog of Helicobacter pylori (strain Shi470).